The following is a 364-amino-acid chain: DNA replication and repair protein RecF (364 aa).

Gly-30 to Thr-37 contributes to the ATP binding site.

It belongs to the RecF family.

The protein localises to the cytoplasm. In terms of biological role, the RecF protein is involved in DNA metabolism; it is required for DNA replication and normal SOS inducibility. RecF binds preferentially to single-stranded, linear DNA. It also seems to bind ATP. This chain is DNA replication and repair protein RecF, found in Clostridium botulinum (strain Loch Maree / Type A3).